The following is a 444-amino-acid chain: UDP-N-acetylmuramoylalanine--D-glutamate ligase (444 aa).

113 to 119 lines the ATP pocket; that stretch reads GSNGKST.

It belongs to the MurCDEF family.

It is found in the cytoplasm. The catalysed reaction is UDP-N-acetyl-alpha-D-muramoyl-L-alanine + D-glutamate + ATP = UDP-N-acetyl-alpha-D-muramoyl-L-alanyl-D-glutamate + ADP + phosphate + H(+). It participates in cell wall biogenesis; peptidoglycan biosynthesis. Its function is as follows. Cell wall formation. Catalyzes the addition of glutamate to the nucleotide precursor UDP-N-acetylmuramoyl-L-alanine (UMA). The protein is UDP-N-acetylmuramoylalanine--D-glutamate ligase of Blochmanniella floridana.